The sequence spans 144 residues: Large ribosomal subunit protein uL16 (144 aa).

A compositionally biased stretch (basic residues) spans 1–19 (MLLPKRVKYRRQHRPKTTG). The disordered stretch occupies residues 1-26 (MLLPKRVKYRRQHRPKTTGRSKGGNE).

Belongs to the universal ribosomal protein uL16 family. Part of the 50S ribosomal subunit.

Functionally, binds 23S rRNA and is also seen to make contacts with the A and possibly P site tRNAs. The chain is Large ribosomal subunit protein uL16 from Macrococcus caseolyticus (strain JCSC5402) (Macrococcoides caseolyticum).